The following is a 498-amino-acid chain: Angiopoietin-1 (498 aa).

Residues 1-19 (MTVFLSFAFFAAILTHIGC) form the signal peptide. Residues 81–119 (QKLQHLEHVMENYTQWLQKLENYIVENMKSEMAQIQQNA) are a coiled coil. N-linked (GlcNAc...) asparagine glycans are attached at residues N92, N122, N154, N243, and N295. The stretch at 153–261 (LNQTSRLEIQ…LELMDTVHNL (109 aa)) forms a coiled coil. The region spanning 277-497 (REEEKPFRDC…STTMMIRPLD (221 aa)) is the Fibrinogen C-terminal domain. Intrachain disulfides connect C286-C315 and C439-C452.

In terms of assembly, homooligomer. Interacts with TEK/TIE2. Interacts with SVEP1/polydom. Interacts with THBD; this interaction significantly inhibits the generation of activated PC and TAFIa/CPB2 by the thrombin/thrombomodulin complex.

It is found in the secreted. Binds and activates TEK/TIE2 receptor by inducing its dimerization and tyrosine phosphorylation. Plays an important role in the regulation of angiogenesis, endothelial cell survival, proliferation, migration, adhesion and cell spreading, reorganization of the actin cytoskeleton, but also maintenance of vascular quiescence. Required for normal angiogenesis and heart development during embryogenesis. After birth, activates or inhibits angiogenesis, depending on the context. Inhibits angiogenesis and promotes vascular stability in quiescent vessels, where endothelial cells have tight contacts. In quiescent vessels, ANGPT1 oligomers recruit TEK to cell-cell contacts, forming complexes with TEK molecules from adjoining cells, and this leads to preferential activation of phosphatidylinositol 3-kinase and the AKT1 signaling cascades. In migrating endothelial cells that lack cell-cell adhesions, ANGT1 recruits TEK to contacts with the extracellular matrix, leading to the formation of focal adhesion complexes, activation of PTK2/FAK and of the downstream kinases MAPK1/ERK2 and MAPK3/ERK1, and ultimately to the stimulation of sprouting angiogenesis. Mediates blood vessel maturation/stability. Implicated in endothelial developmental processes later and distinct from that of VEGF. Appears to play a crucial role in mediating reciprocal interactions between the endothelium and surrounding matrix and mesenchyme. This is Angiopoietin-1 (Angpt1) from Mus musculus (Mouse).